The following is a 2258-amino-acid chain: Probable serine/threonine-protein kinase ifkA (2258 aa).

Disordered regions lie at residues 43–108 (RVNS…HQMG) and 189–308 (EMNN…KEND). A compositionally biased stretch (low complexity) spans 45–57 (NSSDDINNNNNNN). Residues 58 to 100 (NDDDDDNDDYDDSDDENSDSDYDDYDDSDDENSDDEFYSDDED) are compositionally biased toward acidic residues. Low complexity predominate over residues 191-301 (NNLTNSNNSN…NKELIDNNNN (111 aa)). Residues 273–309 (NNNNNISNNKINKINNNNNNKELIDNNNNNKDKENDL) are a coiled coil. Residues 319–691 (WKKGSCIERK…AGILLKHPFL (373 aa)) enclose the Protein kinase 1 domain. Residues 325 to 333 (IERKSNYSV) and lysine 348 each bind ATP. The interval 358-398 (SSSSLTSLSNSNNNNSNNNNNNNNNNNNNNNNNNNNNNNNN) is disordered. A compositionally biased stretch (low complexity) spans 359 to 398 (SSSLTSLSNSNNNNSNNNNNNNNNNNNNNNNNNNNNNNNN). The active-site Proton acceptor is the aspartate 498. Disordered regions lie at residues 741-768 (KSQT…NGSN) and 782-870 (PLAT…MTPL). A compositionally biased stretch (low complexity) spans 746–768 (NNNNDNNNLASSNELLSSSNGSN). Residues 782–791 (PLATSSSLDN) show a composition bias toward polar residues. A compositionally biased stretch (pro residues) spans 793-805 (TPPPSRPISPKPS). Over residues 841–870 (PQQNFNTPPTTTTTTTTPTATPTTPTMTPL) the composition is skewed to low complexity. In terms of domain architecture, Protein kinase 2 spans 894–1482 (FEEIEMIGKG…TKQLLESGLL (589 aa)). Residues 900 to 908 (IGKGGFGVV) and lysine 923 each bind ATP. Positions 1053–1094 (TLSSSNTSSSSSLLSNNKSKILNTSKSTSTNTSTSTSTSNTN) are enriched in low complexity. The tract at residues 1053–1259 (TLSSSNTSSS…SSSRKKPPKE (207 aa)) is disordered. Positions 1095–1106 (KNKKISKKKKSK) are enriched in basic residues. The span at 1156-1185 (NNNNNNDNNNNYHSDNESDSFSGSISMSDG) shows a compositional bias: low complexity. Residues 1206 to 1233 (DENENDDDDEEDDDDEYDEEDDDYETFD) are compositionally biased toward acidic residues. Over residues 1242 to 1251 (SNNSKLSTSS) the composition is skewed to low complexity. Aspartate 1313 functions as the Proton acceptor in the catalytic mechanism. Disordered stretches follow at residues 1343–1370 (KSDD…TAQQ) and 2048–2104 (GSGG…QQTS). A compositionally biased stretch (low complexity) spans 1347-1368 (LNSSTSNTANNINLSSSTNSTA). The segment covering 2048-2072 (GSGGSGGSGGGSSMSSGGGGGGNSN) has biased composition (gly residues). Positions 2085–2099 (SNQSTSSSGNSNNSN) are enriched in low complexity.

Belongs to the protein kinase superfamily. Ser/Thr protein kinase family.

The enzyme catalyses L-seryl-[protein] + ATP = O-phospho-L-seryl-[protein] + ADP + H(+). The catalysed reaction is L-threonyl-[protein] + ATP = O-phospho-L-threonyl-[protein] + ADP + H(+). In terms of biological role, phosphorylates eIF2-alpha, from 1 to 7 hours after the onset of development or during the preaggregation state, resulting in a shift from polysomes to free ribosomes for bulk mRNA. The chain is Probable serine/threonine-protein kinase ifkA (ifkA) from Dictyostelium discoideum (Social amoeba).